The following is a 137-amino-acid chain: Molluscan insulin-related peptide 2 (137 aa).

The N-terminal stretch at 1–31 (MVGVRLVFTNAFVVTVLLTLLLDVVVKPAEG) is a signal peptide. The residue at position 32 (glutamine 32) is a Pyrrolidone carboxylic acid. Intrachain disulfides connect cysteine 47-cysteine 123, cysteine 59-cysteine 136, and cysteine 122-cysteine 127. A propeptide spans 71–83 (DAETGWLLPETMV) (C-beta peptide like). Positions 86 to 110 (NAETDLDDPLRNIKLSSESALTYLT) are cleaved as a propeptide — C-alpha peptide like. Glutamine 113 carries the post-translational modification Pyrrolidone carboxylic acid.

It belongs to the insulin family. As to quaternary structure, heterodimer of a B chain and an A chain linked by two disulfide bonds. In terms of tissue distribution, expressed in the cerebral light-green cells which are giant neuroendocrines cells involved in the control of growth.

It is found in the cytoplasmic vesicle. It localises to the secretory vesicle. In Lymnaea stagnalis (Great pond snail), this protein is Molluscan insulin-related peptide 2.